The chain runs to 79 residues: Small ribosomal subunit protein uS17 (79 aa).

This sequence belongs to the universal ribosomal protein uS17 family. Part of the 30S ribosomal subunit.

Functionally, one of the primary rRNA binding proteins, it binds specifically to the 5'-end of 16S ribosomal RNA. This is Small ribosomal subunit protein uS17 from Orientia tsutsugamushi (strain Ikeda) (Rickettsia tsutsugamushi).